A 392-amino-acid chain; its full sequence is Phospho-N-acetylmuramoyl-pentapeptide-transferase (392 aa).

Transmembrane regions (helical) follow at residues 28 to 48, 76 to 96, 100 to 120, 137 to 157, 193 to 213, 225 to 245, 262 to 282, 289 to 309, 314 to 334, and 369 to 389; these read RALM…PFVI, TMGG…WFDL, FVWI…VDDW, YLWQ…SISE, ISYP…IVGS, GLAI…AYVT, SGEL…FLWF, VFMG…IAVI, IVLA…MLQV, and QVVV…LSTL.

It belongs to the glycosyltransferase 4 family. MraY subfamily. Mg(2+) serves as cofactor.

The protein localises to the cell inner membrane. The enzyme catalyses UDP-N-acetyl-alpha-D-muramoyl-L-alanyl-gamma-D-glutamyl-meso-2,6-diaminopimeloyl-D-alanyl-D-alanine + di-trans,octa-cis-undecaprenyl phosphate = di-trans,octa-cis-undecaprenyl diphospho-N-acetyl-alpha-D-muramoyl-L-alanyl-D-glutamyl-meso-2,6-diaminopimeloyl-D-alanyl-D-alanine + UMP. Its pathway is cell wall biogenesis; peptidoglycan biosynthesis. Catalyzes the initial step of the lipid cycle reactions in the biosynthesis of the cell wall peptidoglycan: transfers peptidoglycan precursor phospho-MurNAc-pentapeptide from UDP-MurNAc-pentapeptide onto the lipid carrier undecaprenyl phosphate, yielding undecaprenyl-pyrophosphoryl-MurNAc-pentapeptide, known as lipid I. This chain is Phospho-N-acetylmuramoyl-pentapeptide-transferase, found in Polaromonas naphthalenivorans (strain CJ2).